A 918-amino-acid chain; its full sequence is Pre-pro-metalloprotease PrtV (918 aa).

The N-terminal stretch at 1–23 (MKTIKKTLLAAAIASFFSSGLYA) is a signal peptide. A propeptide spanning residues 24-105 (QTPIDLGVVN…QKGPHKARVF (82 aa)) is cleaved from the precursor. H330 contacts Zn(2+). E331 is an active-site residue. Residue H334 coordinates Zn(2+). Ca(2+)-binding residues include I757, D782, D821, and D825. 2 PKD domains span residues 758–835 (APVA…TIKV) and 855–918 (VTMW…KVKL). A propeptide spanning residues 835–918 (VDTPNALPQA…VTTITIKVKL (84 aa)) is cleaved from the precursor.

The protein belongs to the peptidase M6 family. It depends on Zn(2+) as a cofactor. In terms of processing, prtV is expressed as an inactive, multidomain, 102 kDa pre-pro-metalloprotease. To form a catalytically active protease, PrtV is first secreted, and then it undergoes N- and C-terminal cleavages during envelope translocation to yield a 81 kDa pro-metalloprotease. Outside the cell, the 81 kDa pro-metalloprotease undergoes an auto-cleavage. The two major products of autoproteolysis (37 kDa and 18 kDa) together form the so called 55 kDa active complex.

The protein resides in the secreted. Calcium plays an important structural role, providing stability to this protein in the cytoplasm. Outside the cell, the decrease of the calcium concentration triggers the autoproteolysis. PrtV activity is increased by 25 mM of Sr(2+) or Mg(2+) and to some extent by Ba(2+); however, Ba(2+) inhibits PrtV at higher concentrations. Completely inhibited by EDTA and 1,10-phenanthroline. Functionally, metalloprotease that exhibits a cytotoxic effect leading to cell death. In host tissues, it could play a role in pathogenesis by modulating the stability of the extracellular matrix components such as fibronectin and fibrinogen. Also able to cleave plasminogen. The chain is Pre-pro-metalloprotease PrtV from Vibrio cholerae serotype O1 (strain ATCC 39315 / El Tor Inaba N16961).